Consider the following 489-residue polypeptide: Long chain base biosynthesis protein 2a (489 aa).

Residues 2 to 22 (ITIPYLTAVSTYFSYGLLFAF) traverse the membrane as a helical segment. The residue at position 311 (Lys311) is an N6-(pyridoxal phosphate)lysine.

Belongs to the class-II pyridoxal-phosphate-dependent aminotransferase family. In terms of assembly, heterodimer with LCB1. Component of the serine palmitoyltransferase (SPT) complex, composed of LCB1 and LCB2 (LCB2a or LCB2b). Pyridoxal 5'-phosphate serves as cofactor. As to expression, ubiquitous. Detected in leaves, roots, stems, flowers and at a lower level in mature seeds.

It localises to the endoplasmic reticulum membrane. It catalyses the reaction L-serine + hexadecanoyl-CoA + H(+) = 3-oxosphinganine + CO2 + CoA. It functions in the pathway lipid metabolism; sphingolipid metabolism. Functionally, serine palmitoyltransferase (SPT). The heterodimer formed with LCB1 constitutes the catalytic core. Involved in the regulation of the programmed cell death (PCD) signaling pathway. Plays an important role during male gametogenesis and embryogenesis. This is Long chain base biosynthesis protein 2a (LCB2a) from Arabidopsis thaliana (Mouse-ear cress).